Here is a 281-residue protein sequence, read N- to C-terminus: Elongation factor 1-delta (281 aa).

Position 2 is an N-acetylalanine (Ala-2). Lys-17 carries the post-translational modification N6-acetyllysine. Residues Ser-37, Glu-40, Ser-44, and Ser-60 each carry the phosphoserine modification. A Phosphothreonine modification is found at Thr-73. The leucine-zipper stretch occupies residues 80–115 (LVVRIASLEVENQSLRGVVQELQQAISKLEARLNVL). 4 positions are modified to phosphoserine: Ser-86, Asn-91, Leu-94, and Ser-106. Lys-107 carries the post-translational modification N6-acetyllysine. Position 117 is an N6-acetyllysine; alternate (Lys-117). The residue at position 117 (Lys-117) is an N6-succinyllysine; alternate. Residues 118–172 (SSPGHRATAPQTQHVSPMRQVEPPAKKPATPAEDDEDDDIDLFGSDNEEEDKEAA) are disordered. Phosphoserine is present on Ser-119. Position 129 is a phosphothreonine (Thr-129). A Phosphoserine modification is found at Ser-133. Thr-147 is subject to Phosphothreonine. The segment covering 149–169 (AEDDEDDDIDLFGSDNEEEDK) has biased composition (acidic residues). Ser-162 carries the post-translational modification Phosphoserine; by CK2. A catalytic (GEF) region spans residues 173–281 (QLREERLRQY…SVDIAAFNKI (109 aa)).

It belongs to the EF-1-beta/EF-1-delta family. As to quaternary structure, EF-1 is composed of 4 subunits: alpha, beta, delta isoform 1, and gamma. Isoform 2 interacts with HSF1 and NFE2L2. Isoform 2 is specifically expressed in brain, cerebellum and testis.

The protein localises to the nucleus. EF-1-beta and EF-1-delta stimulate the exchange of GDP bound to EF-1-alpha to GTP, regenerating EF-1-alpha for another round of transfer of aminoacyl-tRNAs to the ribosome. In terms of biological role, regulates induction of heat-shock-responsive genes through association with heat shock transcription factors and direct DNA-binding at heat shock promoter elements (HSE). This Homo sapiens (Human) protein is Elongation factor 1-delta (EEF1D).